The primary structure comprises 37 residues: Alpha-conotoxin-like Kn1.2 (37 aa).

A compositionally biased stretch (basic and acidic residues) spans Glu-1–Ala-15. A propeptide spanning residues Glu-1–Gln-22 is cleaved from the precursor. Residues Glu-1–Pro-23 are disordered. Disulfide bonds link Cys-25/Cys-31 and Cys-26/Cys-36. A Cysteine amide modification is found at Cys-36.

This sequence belongs to the conotoxin A superfamily. As to expression, expressed by the venom duct.

Its subcellular location is the secreted. Alpha-conotoxins act on postsynaptic membranes, they bind to the nicotinic acetylcholine receptors (nAChR) and thus inhibit them. This toxin inhibits high voltage-activated (HVA) calcium channel currents in rat DRG neurons (13% inhibition at 1 uM toxin) probably by activating GABA(B) receptors (GABBR1 and/or GABBR2). This is Alpha-conotoxin-like Kn1.2 from Conus kinoshitai (Kinoshita's cone).